The following is a 399-amino-acid chain: Dihydrolipoyllysine-residue succinyltransferase component of 2-oxoglutarate dehydrogenase complex (399 aa).

One can recognise a Lipoyl-binding domain in the interval 2–77; sequence AIDIKAPTFP…LSGELLGKLT (76 aa). K43 bears the N6-lipoyllysine mark. The Peripheral subunit-binding (PSBD) domain maps to 104–141; the sequence is ILSPAARKIAEENAIAADSITGTGKGGRVTKEDAVAAA. Residues H370 and D374 contribute to the active site.

Belongs to the 2-oxoacid dehydrogenase family. Forms a 24-polypeptide structural core with octahedral symmetry. Part of the 2-oxoglutarate dehydrogenase (OGDH) complex composed of E1 (2-oxoglutarate dehydrogenase), E2 (dihydrolipoamide succinyltransferase) and E3 (dihydrolipoamide dehydrogenase); the complex contains multiple copies of the three enzymatic components (E1, E2 and E3). It depends on (R)-lipoate as a cofactor.

It catalyses the reaction N(6)-[(R)-dihydrolipoyl]-L-lysyl-[protein] + succinyl-CoA = N(6)-[(R)-S(8)-succinyldihydrolipoyl]-L-lysyl-[protein] + CoA. The protein operates within amino-acid degradation; L-lysine degradation via saccharopine pathway; glutaryl-CoA from L-lysine: step 6/6. Its function is as follows. E2 component of the 2-oxoglutarate dehydrogenase (OGDH) complex which catalyzes the second step in the conversion of 2-oxoglutarate to succinyl-CoA and CO(2). The sequence is that of Dihydrolipoyllysine-residue succinyltransferase component of 2-oxoglutarate dehydrogenase complex (sucB) from Azotobacter vinelandii.